A 493-amino-acid polypeptide reads, in one-letter code: Probable polyol transporter 6 (493 aa).

12 consecutive transmembrane segments (helical) span residues 25-45 (SIVS…MVFI), 54-74 (VQIE…SLLA), 85-105 (YTIV…GWGP), 116-136 (TAGL…AEIA), 142-162 (GLLA…GYIV), 177-197 (LMLG…LKMP), 275-295 (VLLT…EAVL), 313-333 (LFLV…TATL), 343-363 (LLLT…FGLT), 372-392 (LAWA…FFSI), 414-434 (GASL…MSFL), and 444-464 (GAFF…FFLL).

This sequence belongs to the major facilitator superfamily. Sugar transporter (TC 2.A.1.1) family.

The protein localises to the membrane. Functionally, plasma membrane sugar-proton symporter. The polypeptide is Probable polyol transporter 6 (PLT6) (Arabidopsis thaliana (Mouse-ear cress)).